The primary structure comprises 487 residues: Acetylcholine receptor subunit beta-type acr-3 (487 aa).

Positions 1–20 (MQKIWLFSIITIFLITELQC) are cleaved as a signal peptide. At 21–231 (YPNSAEERLL…KIRRKALFYT (211 aa)) the chain is on the extracellular side. Asn-46 carries an N-linked (GlcNAc...) asparagine glycan. The cysteines at positions 151 and 165 are disulfide-linked. 3 helical membrane passes run 232–252 (VILI…FYLP), 259–279 (ITLA…VSKI), and 294–314 (LLMT…IINV). Over 315–439 (YFRGPATHIM…WKFVSVVIDR (125 aa)) the chain is Cytoplasmic. Residues 380 to 400 (ISEQPKQTSRKDGSSSEEKLS) are disordered. Residues 440–460 (LLLYLFFAVTTGGTVGILLSA) form a helical membrane-spanning segment.

This sequence belongs to the ligand-gated ion channel (TC 1.A.9) family. Acetylcholine receptor (TC 1.A.9.1) subfamily. Component of nicotinic acetylcholine receptor. In cholinergic motoneurons, composed of 2 non-alpha subunits acr-2 and acr-3, and 3 alpha subunits unc-38, unc-63 and acr-12.

The protein resides in the postsynaptic cell membrane. The protein localises to the cell membrane. Functionally, non-alpha subunit of nicotinic acetylcholine receptor (nAChR). Probably acts in cholinergic motoneurons to regulate presynaptic neurotransmitter release, thereby ensuring normal level of excitation of cholinergic motoneurons during locomotion. The sequence is that of Acetylcholine receptor subunit beta-type acr-3 (acr-3) from Caenorhabditis elegans.